The chain runs to 512 residues: Protein male-specific lethal-3 (512 aa).

In terms of domain architecture, Chromo spans 11–90 (FHKGEIVLCY…QLQRELAEAA (80 aa)). A disordered region spans residues 98–175 (YSYKGTPDKP…DGRLKGNRGR (78 aa)). Over residues 149 to 169 (RTRDNSGGKRKEKPPSGDGRL) the composition is skewed to basic and acidic residues. The 305-residue stretch at 196–500 (QEDRIMMRVS…STALPQEDLQ (305 aa)) folds into the MRG domain.

Component of the male-specific lethal (MSL) histone acetyltransferase complex, composed of mof, mle, msl-1, msl-2 and msl-3 proteins, as well as roX1 and roX2 non-coding RNAs. Component of a maternal MSL subcomplex composed of mof, msl-1 and msl-3. Ubiquitinated by msl-2.

The protein resides in the nucleus. Its subcellular location is the chromosome. Component of the male-specific lethal (MSL) histone acetyltransferase complex, a multiprotein complex essential for elevating transcription of the single X chromosome in the male (X chromosome dosage compensation). The MSL complex specifically associates with the single X chromosome in males and mediates formation of H4K16ac, promoting a two-fold activation of X chromosome. Acts as a histone reader that specifically recognizes and binds histone H3 trimethylated at 'Lys-36' (H3K36me3) and histone H4 monomethylated at 'Lys-20' (H4K20me1). Within the MSL complex, mediates the spreading of the MSL complex from initiation sites on the male X chromosome to flanking chromatin. Following initial recruitment of the MSL complex to male X chromosome by msl-2, msl-3 binds H3K36me3 and promotes spreading of the MSL complex in cis. In addition to its role in dosage compensation in males, promotes germline stem cell differentiation in females: recognizes and binds H3K36me3, promoting recruitment of the ATAC complex and transcription of genes, such as RpS19b. This is Protein male-specific lethal-3 from Drosophila melanogaster (Fruit fly).